Here is a 336-residue protein sequence, read N- to C-terminus: Carbamoyl dehydratase HypE (336 aa).

At cysteine 336 the chain carries S-carbamoylcysteine; by HypF; alternate. Cysteine 336 carries the post-translational modification S-cyanocysteine; by autocatalysis; alternate.

It belongs to the HypE family. In terms of assembly, homodimer. Forms a complex with HypF. Also forms a complex with HypC, or HybG, and HypD. Post-translationally, modified by HypF, which adds a carboxamido group to the thiolate of the C-terminal cysteine, yielding a protein-S-carboxamide. The carboxamido group is then dehydrated by HypE itself to yield a protein-thiocyanate.

It carries out the reaction C-terminal S-carboxamide-L-cysteinyl-[HypE protein] + ATP = C-terminal S-cyanate-L-cysteinyl-[HypE protein] + ADP + phosphate + H(+). It functions in the pathway protein modification; [NiFe] hydrogenase maturation. Functionally, involved in the maturation of [NiFe] hydrogenases. Along with HypF, it catalyzes the synthesis of the CN ligands of the active site iron of [NiFe]-hydrogenases. HypE catalyzes the ATP-dependent dehydration of the carboxamido group attached to its C-terminal cysteine to a cyano group. The cyano group is then transferred from HypE to the HypC-HypD complex or the HybG-HypD complex. The sequence is that of Carbamoyl dehydratase HypE from Escherichia coli (strain K12).